The chain runs to 150 residues: UPF0260 protein PputGB1_4117 (150 aa).

The protein belongs to the UPF0260 family.

The chain is UPF0260 protein PputGB1_4117 from Pseudomonas putida (strain GB-1).